The chain runs to 357 residues: Large ribosomal subunit protein uL10 (357 aa).

The tract at residues Met-311–Gly-357 is disordered. A compositionally biased stretch (acidic residues) spans Glu-325 to Ala-348.

It belongs to the universal ribosomal protein uL10 family. Part of the 50S ribosomal subunit. Forms part of the ribosomal stalk which helps the ribosome interact with GTP-bound translation factors. Forms a heptameric L10(L12)2(L12)2(L12)2 complex, where L10 forms an elongated spine to which the L12 dimers bind in a sequential fashion.

In terms of biological role, forms part of the ribosomal stalk, playing a central role in the interaction of the ribosome with GTP-bound translation factors. The sequence is that of Large ribosomal subunit protein uL10 from Methanopyrus kandleri (strain AV19 / DSM 6324 / JCM 9639 / NBRC 100938).